A 457-amino-acid chain; its full sequence is Bifunctional protein GlmU (457 aa).

The tract at residues M1–R228 is pyrophosphorylase. Residues L9–G12, K23, Q73, and G78–T79 contribute to the UDP-N-acetyl-alpha-D-glucosamine site. D102 serves as a coordination point for Mg(2+). UDP-N-acetyl-alpha-D-glucosamine is bound by residues G139, E154, N169, and N226. N226 provides a ligand contact to Mg(2+). Residues V229–N249 are linker. Residues G250–L457 are N-acetyltransferase. UDP-N-acetyl-alpha-D-glucosamine is bound by residues R331 and K349. Residue H361 is the Proton acceptor of the active site. UDP-N-acetyl-alpha-D-glucosamine is bound by residues Y364 and N375. Acetyl-CoA is bound by residues N384–Y385, A421, and R438.

This sequence in the N-terminal section; belongs to the N-acetylglucosamine-1-phosphate uridyltransferase family. In the C-terminal section; belongs to the transferase hexapeptide repeat family. As to quaternary structure, homotrimer. The cofactor is Mg(2+).

It is found in the cytoplasm. It catalyses the reaction alpha-D-glucosamine 1-phosphate + acetyl-CoA = N-acetyl-alpha-D-glucosamine 1-phosphate + CoA + H(+). The catalysed reaction is N-acetyl-alpha-D-glucosamine 1-phosphate + UTP + H(+) = UDP-N-acetyl-alpha-D-glucosamine + diphosphate. The protein operates within nucleotide-sugar biosynthesis; UDP-N-acetyl-alpha-D-glucosamine biosynthesis; N-acetyl-alpha-D-glucosamine 1-phosphate from alpha-D-glucosamine 6-phosphate (route II): step 2/2. It participates in nucleotide-sugar biosynthesis; UDP-N-acetyl-alpha-D-glucosamine biosynthesis; UDP-N-acetyl-alpha-D-glucosamine from N-acetyl-alpha-D-glucosamine 1-phosphate: step 1/1. Its pathway is bacterial outer membrane biogenesis; LPS lipid A biosynthesis. Its function is as follows. Catalyzes the last two sequential reactions in the de novo biosynthetic pathway for UDP-N-acetylglucosamine (UDP-GlcNAc). The C-terminal domain catalyzes the transfer of acetyl group from acetyl coenzyme A to glucosamine-1-phosphate (GlcN-1-P) to produce N-acetylglucosamine-1-phosphate (GlcNAc-1-P), which is converted into UDP-GlcNAc by the transfer of uridine 5-monophosphate (from uridine 5-triphosphate), a reaction catalyzed by the N-terminal domain. The protein is Bifunctional protein GlmU of Thermoanaerobacter pseudethanolicus (strain ATCC 33223 / 39E) (Clostridium thermohydrosulfuricum).